Here is a 334-residue protein sequence, read N- to C-terminus: DNA-directed RNA polymerase subunit alpha (334 aa).

Residues 1–231 (MNMIKIEPYI…KQMSIFGVDL (231 aa)) are alpha N-terminal domain (alpha-NTD). Positions 247–334 (ELKTLMIKID…NRKLAKLKSN (88 aa)) are alpha C-terminal domain (alpha-CTD).

Belongs to the RNA polymerase alpha chain family. Homodimer. The RNAP catalytic core consists of 2 alpha, 1 beta/beta' and 1 omega subunit. When a sigma factor is associated with the core the holoenzyme is formed, which can initiate transcription.

It carries out the reaction RNA(n) + a ribonucleoside 5'-triphosphate = RNA(n+1) + diphosphate. In terms of biological role, DNA-dependent RNA polymerase catalyzes the transcription of DNA into RNA using the four ribonucleoside triphosphates as substrates. In Helicobacter hepaticus (strain ATCC 51449 / 3B1), this protein is DNA-directed RNA polymerase subunit alpha.